The following is a 776-amino-acid chain: Ribosomal biogenesis protein LAS1L (776 aa).

Acidic residues predominate over residues 185–227 (DEDQLDAEDPEEEEREIIADDVLEEIPEPQDDDKDEELAVEDD). A disordered region spans residues 185–247 (DEDQLDAEDP…SHPEPSSRHK (63 aa)). Positions 228–247 (ANTKGNEEVASHPEPSSRHK) are enriched in basic and acidic residues. Phosphoserine occurs at positions 425 and 509. Residues 501 to 646 (KAIEGSSSSS…DYDDDEEEDR (146 aa)) form a disordered region. Over residues 544–557 (GNLKDVKQEEKKEN) the composition is skewed to basic and acidic residues. Acidic residues-rich tracts occupy residues 558-602 (EEEE…EEEE) and 611-646 (MEAD…EEDR). S658 carries the post-translational modification Phosphoserine. Residues 677-696 (SAWQVSSEDVRWGTFPLGRL) form an interaction with NOL9 region. A disordered region spans residues 733–759 (SSTLSLCCGGSNTNSSSSSSSGNMEGL). A compositionally biased stretch (low complexity) spans 741–755 (GGSNTNSSSSSSSGN).

Belongs to the LAS1 family. As to quaternary structure, component of some MLL1/MLL complex, at least composed of the core components KMT2A/MLL1, ASH2L, HCFC1/HCF1, WDR5 and RBBP5, as well as the facultative components BACC1, CHD8, E2F6, HSP70, INO80C, KANSL1, LAS1L, MAX, MCRS1, MGA, MYST1/MOF, PELP1, PHF20, PRP31, RING2, RUVB1/TIP49A, RUVB2/TIP49B, SENP3, TAF1, TAF4, TAF6, TAF7, TAF9 and TEX10. Component of the 5FMC complex, at least composed of PELP1, LAS1L, TEX10, WDR18 and SENP3; the complex interacts with methylated CHTOP and ZNF148. Interacts with NOL9 to form an ITS2 pre-rRNA endonuclease-kinase complex.

The protein localises to the nucleus. It is found in the nucleolus. It localises to the nucleoplasm. The protein resides in the cytoplasm. Required for the synthesis of the 60S ribosomal subunit and maturation of the 28S rRNA. Functions as a component of the Five Friends of Methylated CHTOP (5FMC) complex; the 5FMC complex is recruited to ZNF148 by methylated CHTOP, leading to desumoylation of ZNF148 and subsequent transactivation of ZNF148 target genes. Required for the efficient pre-rRNA processing at both ends of internal transcribed spacer 2 (ITS2). The chain is Ribosomal biogenesis protein LAS1L (Las1l) from Mus musculus (Mouse).